Consider the following 338-residue polypeptide: tRNA-specific 2-thiouridylase MnmA (338 aa).

Residues 6–13 (LMSGGIDS) and methionine 32 contribute to the ATP site. The active-site Nucleophile is the cysteine 87. A disulfide bridge connects residues cysteine 87 and cysteine 185. An ATP-binding site is contributed by glycine 111. The interaction with tRNA stretch occupies residues 135 to 137 (KDQ). Cysteine 185 serves as the catalytic Cysteine persulfide intermediate. Residues 288–289 (RY) form an interaction with tRNA region.

Belongs to the MnmA/TRMU family.

The protein resides in the cytoplasm. It carries out the reaction S-sulfanyl-L-cysteinyl-[protein] + uridine(34) in tRNA + AH2 + ATP = 2-thiouridine(34) in tRNA + L-cysteinyl-[protein] + A + AMP + diphosphate + H(+). Functionally, catalyzes the 2-thiolation of uridine at the wobble position (U34) of tRNA, leading to the formation of s(2)U34. The polypeptide is tRNA-specific 2-thiouridylase MnmA (Syntrophomonas wolfei subsp. wolfei (strain DSM 2245B / Goettingen)).